The following is a 144-amino-acid chain: Histone H2B.2, sperm (144 aa).

A disordered region spans residues 1 to 51 (MPRSPSKTSPRKGSPRRGSPSRKASPKRGGKGAKRAGKGGRRRNVVRRRRR). 5 consecutive short sequence motifs (SPKK motif) follow at residues 4 to 7 (SPSK), 9 to 12 (SPRK), 14 to 17 (SPRR), 19 to 22 (SPSR), and 25 to 28 (SPKR). Ser-14, Ser-19, and Ser-25 each carry phosphoserine. The segment covering 24-51 (ASPKRGGKGAKRAGKGGRRRNVVRRRRR) has biased composition (basic residues). An O-linked (GlcNAc) serine glycan is attached at Ser-131. Residue Lys-139 forms a Glycyl lysine isopeptide (Lys-Gly) (interchain with G-Cter in ubiquitin) linkage.

Belongs to the histone H2B family. In terms of assembly, the nucleosome is a histone octamer containing two molecules each of H2A, H2B, H3 and H4 assembled in one H3-H4 heterotetramer and two H2A-H2B heterodimers. The octamer wraps approximately 147 bp of DNA. Monoubiquitination of Lys-139 gives a specific tag for epigenetic transcriptional activation and is also prerequisite for histone H3 'Lys-4' and 'Lys-79' methylation. In terms of processing, phosphorylated on SPKK motifs 3, 4 and 5; which may regulate DNA binding. Dephosphorylated during maturation of spermatids to mature sperm and rephosphorylated at fertilization. Post-translationally, glcNAcylation at Ser-131 promotes monoubiquitination of Lys-139. It fluctuates in response to extracellular glucose, and associates with transcribed genes.

The protein localises to the nucleus. Its subcellular location is the chromosome. Core component of nucleosome. Nucleosomes wrap and compact DNA into chromatin, limiting DNA accessibility to the cellular machineries which require DNA as a template. Histones thereby play a central role in transcription regulation, DNA repair, DNA replication and chromosomal stability. DNA accessibility is regulated via a complex set of post-translational modifications of histones, also called histone code, and nucleosome remodeling. The chain is Histone H2B.2, sperm from Strongylocentrotus purpuratus (Purple sea urchin).